The chain runs to 328 residues: Cell division protein ZipA (328 aa).

The Periplasmic segment spans residues Met-1 to Arg-6. Residues Leu-7–Thr-27 traverse the membrane as a helical segment. At Ser-28–Ala-328 the chain is on the cytoplasmic side. The segment covering Gly-61–Glu-72 has biased composition (basic and acidic residues). Residues Gly-61–Lys-183 form a disordered region. Polar residues-rich tracts occupy residues Lys-95–Arg-104 and Ala-164–Glu-174.

This sequence belongs to the ZipA family. In terms of assembly, interacts with FtsZ via their C-terminal domains.

The protein localises to the cell inner membrane. Functionally, essential cell division protein that stabilizes the FtsZ protofilaments by cross-linking them and that serves as a cytoplasmic membrane anchor for the Z ring. Also required for the recruitment to the septal ring of downstream cell division proteins. The protein is Cell division protein ZipA of Yersinia pestis bv. Antiqua (strain Antiqua).